We begin with the raw amino-acid sequence, 504 residues long: Facilitated trehalose transporter Tret1 (504 aa).

Residues 1 to 39 (MELNNKEDSPRHTVPFVRQITEDGKAKLEIYRPTTNPIY) lie on the Cytoplasmic side of the membrane. Residues 40–60 (IYTQILAAIAVSMGSMVVGFA) traverse the membrane as a helical segment. Residues 61–87 (SAYTSPALVSMQNTTITSFKVTEQEAS) lie on the Extracellular side of the membrane. N-linked (GlcNAc...) asparagine glycosylation occurs at N73. The helical transmembrane segment at 88-108 (WVGGIMPLAGLAGGIAGGPFI) threads the bilayer. Over 109–120 (EYLGRKNTILAT) the chain is Cytoplasmic. Residues 121-141 (AVPFIVAWLLIAFANSIWMVL) traverse the membrane as a helical segment. Topologically, residues 142-145 (AGRA) are extracellular. Residues 146 to 166 (LSGFCVGIASLSLPVYLGETV) form a helical membrane-spanning segment. The Cytoplasmic segment spans residues 167 to 171 (QPEVR). A helical transmembrane segment spans residues 172–192 (GTLGLLPTAFGNIGILICFVA). At 193–199 (GKYVNWS) the chain is on the extracellular side. A glycan (N-linked (GlcNAc...) asparagine) is linked at N197. A helical transmembrane segment spans residues 200-220 (GLAFIGSILPIPFMVLTLLIP). At 221–283 (ETPRWFVTRG…DLMKRSNLKP (63 aa)) the chain is on the cytoplasmic side. Residues 284–304 (LLIALGLMFFQQLSGINAVIF) form a helical membrane-spanning segment. The Extracellular segment spans residues 305–320 (YTVSIFKDAGSTIDEN). Residues 321–341 (LCTIIVGVVNFGATFFATVLI) traverse the membrane as a helical segment. Over 342–347 (DRLGRK) the chain is Cytoplasmic. A helical membrane pass occupies residues 348–368 (ILLYISEVAMVITLLTLGTFF). Residues 369–387 (YYKNSGNDVSNIGWLPLAS) lie on the Extracellular side of the membrane. The chain crosses the membrane as a helical span at residues 388 to 408 (FVIYVIGFSSGVGPIPWLMLG). Topologically, residues 409–424 (EILPGKIRGSAASVAT) are cytoplasmic. A helical membrane pass occupies residues 425–445 (GFNWTCTFIVTKTFADIVAAI). Residues 446-448 (GNH) are Extracellular-facing. Residues 449–469 (GAFWFFGVICLIGLFFVIFFV) traverse the membrane as a helical segment. Residues 470 to 504 (PETQGKSLEEIERKMMGRVRRMSSVANMKPLSFNM) lie on the Cytoplasmic side of the membrane.

It belongs to the major facilitator superfamily. Sugar transporter (TC 2.A.1.1) family. Trehalose transporter subfamily. As to expression, highest expression in the fat body. Not expressed in other tissues including the midgut, muscle, and integuments after 24 hours of dehydration.

Its subcellular location is the cell membrane. High-capacity facilitative transporter for trehalose, required to induce anhydrobiosis. Anhydrobiotic larvae can survive almost complete dehydration. Does not transport maltose, sucrose or lactose. Mediates the bidirectional transfer of trehalose. Responsible for the transport of trehalose synthesized in the fat body and the incorporation of trehalose into other tissues that require a carbon source, thereby regulating trehalose levels in the hemolymph. The sequence is that of Facilitated trehalose transporter Tret1 from Polypedilum vanderplanki (Sleeping chironomid midge).